Consider the following 347-residue polypeptide: Heme A synthase (347 aa).

The next 8 membrane-spanning stretches (helical) occupy residues 14 to 34, 95 to 115, 125 to 145, 166 to 186, 198 to 218, 260 to 280, 289 to 309, and 311 to 331; these read VKVW…VGGI, YFHR…FLYF, LIVN…MGWL, LLLA…AVIL, LIFY…SLVA, FIHE…LLIL, LLLV…IYNV, and IALA…NTYL. His262 contributes to the heme binding site. Position 317 (His317) interacts with heme.

The protein belongs to the COX15/CtaA family. Type 2 subfamily. In terms of assembly, interacts with CtaB. Heme b is required as a cofactor.

The protein localises to the cell membrane. It catalyses the reaction Fe(II)-heme o + 2 A + H2O = Fe(II)-heme a + 2 AH2. Its pathway is porphyrin-containing compound metabolism; heme A biosynthesis; heme A from heme O: step 1/1. Its function is as follows. Catalyzes the conversion of heme O to heme A by two successive hydroxylations of the methyl group at C8. The first hydroxylation forms heme I, the second hydroxylation results in an unstable dihydroxymethyl group, which spontaneously dehydrates, resulting in the formyl group of heme A. This chain is Heme A synthase, found in Ehrlichia canis (strain Jake).